An 87-amino-acid chain; its full sequence is Lantipeptide prochlorosin 3.3 (87 aa).

A propeptide spanning residues 1-64 (MSEEQLKAFI…DEELEAASGG (64 aa)) is cleaved from the precursor. Position 67 is a 2,3-didehydrobutyrine (Thr67). The beta-methyllanthionine (Thr-Cys) cross-link spans 75–85 (TAGCYGGTKMC). A cross-link (beta-methyllanthionine (Cys-Thr)) is located at residues 78–82 (CYGGT).

Post-translationally, cross-links are proved in vitro, when coepressed in E.coli with the ProcM lanthionine synthetase. In terms of processing, the beta-methyllanthionine residues have a DL configuration (with 2S,3S,6R stereochemistry). Maturation of prochlorosin involves the enzymatic conversion of Thr, and Ser into dehydrated AA and the formation of thioether bonds with cysteines. This is followed by membrane translocation and cleavage of the modified precursor.

Its subcellular location is the secreted. Lanthionine-containing peptide (lantipeptide) with unknown function. Does not show antibiotic activity against Lactococcus lactis 117 and Bacillus subtilis 6633 bacteria. Organisms that produce this peptide live in oligotrophic environments at very dilute concentrations, suggesting this peptide is not secreted to influence other bacteria. The chain is Lantipeptide prochlorosin 3.3 from Prochlorococcus marinus (strain MIT 9313).